Here is a 958-residue protein sequence, read N- to C-terminus: Unconventional myosin-Ih (958 aa).

Residues 12–691 (GVQDFVLLDA…TLFATEDAFE (680 aa)) form the Myosin motor domain. Residue 105 to 112 (GESGAGKT) coordinates ATP. At serine 365 the chain carries Phosphoserine. The interval 568 to 590 (LSSLLEILISKEPSYIRCIKPNE) is actin-binding. IQ domains follow at residues 694–716 (KHQL…EYMK) and 717–746 (KRQA…AVQI). The TH1 domain occupies 773–955 (RKNYILNLRY…NGQLRVVSAG (183 aa)).

Belongs to the TRAFAC class myosin-kinesin ATPase superfamily. Myosin family. As to expression, highly expressed in the central nervous system, including the forebrain, midbrain and lower medulla. In the lower medulla, it is broadly expressed throughout the reticular formation. It is expressed in the retrotrapezoid nucleus and the nucleus of the solitary tract, as well as motor neurons of the facial, vagal and ambiguus nuclei. Expressed in neonatal inner-ear organs.

Myosins are actin-based motor molecules with ATPase activity. Unconventional myosins serve in intracellular movements. Their highly divergent tails are presumed to bind to membranous compartments, which would be moved relative to actin filaments. The polypeptide is Unconventional myosin-Ih (Myo1h) (Mus musculus (Mouse)).